Here is a 209-residue protein sequence, read N- to C-terminus: Uracil phosphoribosyltransferase (209 aa).

5-phospho-alpha-D-ribose 1-diphosphate is bound by residues R79, R104, and 131-139; that span reads DPMLATGGS. Uracil-binding positions include I194 and 199–201; that span reads GDA. D200 is a 5-phospho-alpha-D-ribose 1-diphosphate binding site.

The protein belongs to the UPRTase family. It depends on Mg(2+) as a cofactor.

The catalysed reaction is UMP + diphosphate = 5-phospho-alpha-D-ribose 1-diphosphate + uracil. The protein operates within pyrimidine metabolism; UMP biosynthesis via salvage pathway; UMP from uracil: step 1/1. Its activity is regulated as follows. Allosterically activated by GTP. Functionally, catalyzes the conversion of uracil and 5-phospho-alpha-D-ribose 1-diphosphate (PRPP) to UMP and diphosphate. This is Uracil phosphoribosyltransferase from Clostridium beijerinckii (strain ATCC 51743 / NCIMB 8052) (Clostridium acetobutylicum).